A 265-amino-acid chain; its full sequence is Phosphatidylglycerol--prolipoprotein diacylglyceryl transferase (265 aa).

7 consecutive transmembrane segments (helical) span residues 17-37 (LAIRWYGLMYLAAFAQFIWLA), 59-79 (MLFYGVLGVIIGGRLGEVLFY), 94-114 (VWKGGMSFHGGFLGVLLAMSI), 123-143 (VLDVWDFIAPMVPLGYAFGRL), 177-197 (SPLYQALVDGLLMFILLWLFA), 204-224 (MAVGGMFALLYGSARFFTEYF), and 238-258 (ISAGQMLSVPLIVLGIVMLLI). An a 1,2-diacyl-sn-glycero-3-phospho-(1'-sn-glycerol)-binding site is contributed by R142.

The protein belongs to the Lgt family.

It is found in the cell inner membrane. It carries out the reaction L-cysteinyl-[prolipoprotein] + a 1,2-diacyl-sn-glycero-3-phospho-(1'-sn-glycerol) = an S-1,2-diacyl-sn-glyceryl-L-cysteinyl-[prolipoprotein] + sn-glycerol 1-phosphate + H(+). It participates in protein modification; lipoprotein biosynthesis (diacylglyceryl transfer). Its function is as follows. Catalyzes the transfer of the diacylglyceryl group from phosphatidylglycerol to the sulfhydryl group of the N-terminal cysteine of a prolipoprotein, the first step in the formation of mature lipoproteins. This chain is Phosphatidylglycerol--prolipoprotein diacylglyceryl transferase, found in Janthinobacterium sp. (strain Marseille) (Minibacterium massiliensis).